Consider the following 168-residue polypeptide: G/U mismatch-specific DNA glycosylase (168 aa).

It belongs to the uracil-DNA glycosylase (UDG) superfamily. TDG/mug family. Binds DNA as a monomer.

The protein localises to the cytoplasm. The catalysed reaction is Specifically hydrolyzes mismatched double-stranded DNA and polynucleotides, releasing free uracil.. Functionally, excises ethenocytosine and uracil, which can arise by alkylation or deamination of cytosine, respectively, from the corresponding mispairs with guanine in ds-DNA. It is capable of hydrolyzing the carbon-nitrogen bond between the sugar-phosphate backbone of the DNA and the mispaired base. The complementary strand guanine functions in substrate recognition. Required for DNA damage lesion repair in stationary-phase cells. This Salmonella agona (strain SL483) protein is G/U mismatch-specific DNA glycosylase.